A 166-amino-acid chain; its full sequence is Protein SprT (166 aa).

The 140-residue stretch at 21-160 (ANQHFSREFP…CQQCQQTLAF (140 aa)) folds into the SprT-like domain. H74 is a Zn(2+) binding site. E75 is a catalytic residue. Residue H78 coordinates Zn(2+).

Belongs to the SprT family. Requires Zn(2+) as cofactor.

The protein resides in the cytoplasm. This is Protein SprT from Vibrio atlanticus (strain LGP32) (Vibrio splendidus (strain Mel32)).